A 246-amino-acid polypeptide reads, in one-letter code: 4-hydroxy-tetrahydrodipicolinate reductase (246 aa).

NAD(+) is bound by residues 8–13, 74–76, and 101–104; these read GAKGRM, GTT, and APNF. The active-site Proton donor/acceptor is the His131. His132 serves as a coordination point for (S)-2,3,4,5-tetrahydrodipicolinate. Lys135 (proton donor) is an active-site residue. 141–142 is a (S)-2,3,4,5-tetrahydrodipicolinate binding site; sequence GT.

This sequence belongs to the DapB family.

Its subcellular location is the cytoplasm. It catalyses the reaction (S)-2,3,4,5-tetrahydrodipicolinate + NAD(+) + H2O = (2S,4S)-4-hydroxy-2,3,4,5-tetrahydrodipicolinate + NADH + H(+). The catalysed reaction is (S)-2,3,4,5-tetrahydrodipicolinate + NADP(+) + H2O = (2S,4S)-4-hydroxy-2,3,4,5-tetrahydrodipicolinate + NADPH + H(+). The protein operates within amino-acid biosynthesis; L-lysine biosynthesis via DAP pathway; (S)-tetrahydrodipicolinate from L-aspartate: step 4/4. Functionally, catalyzes the conversion of 4-hydroxy-tetrahydrodipicolinate (HTPA) to tetrahydrodipicolinate. This chain is 4-hydroxy-tetrahydrodipicolinate reductase, found in Cutibacterium acnes (strain DSM 16379 / KPA171202) (Propionibacterium acnes).